The following is an 88-amino-acid chain: Small ribosomal subunit protein uS15c (88 aa).

It belongs to the universal ribosomal protein uS15 family. Part of the 30S ribosomal subunit.

It is found in the plastid. The protein localises to the chloroplast. This is Small ribosomal subunit protein uS15c (rps15) from Capsella bursa-pastoris (Shepherd's purse).